Here is a 127-residue protein sequence, read N- to C-terminus: S-adenosylmethionine decarboxylase proenzyme (127 aa).

Serine 63 serves as the catalytic Schiff-base intermediate with substrate; via pyruvic acid. At serine 63 the chain carries Pyruvic acid (Ser); by autocatalysis. The active-site Proton acceptor; for processing activity is histidine 68. Cysteine 83 functions as the Proton donor; for catalytic activity in the catalytic mechanism.

Belongs to the prokaryotic AdoMetDC family. Type 1 subfamily. In terms of assembly, heterotetramer of two alpha and two beta chains arranged as a dimer of alpha/beta heterodimers. Requires pyruvate as cofactor. In terms of processing, is synthesized initially as an inactive proenzyme. Formation of the active enzyme involves a self-maturation process in which the active site pyruvoyl group is generated from an internal serine residue via an autocatalytic post-translational modification. Two non-identical subunits are generated from the proenzyme in this reaction, and the pyruvate is formed at the N-terminus of the alpha chain, which is derived from the carboxyl end of the proenzyme. The post-translation cleavage follows an unusual pathway, termed non-hydrolytic serinolysis, in which the side chain hydroxyl group of the serine supplies its oxygen atom to form the C-terminus of the beta chain, while the remainder of the serine residue undergoes an oxidative deamination to produce ammonia and the pyruvoyl group blocking the N-terminus of the alpha chain.

It carries out the reaction S-adenosyl-L-methionine + H(+) = S-adenosyl 3-(methylsulfanyl)propylamine + CO2. It functions in the pathway amine and polyamine biosynthesis; S-adenosylmethioninamine biosynthesis; S-adenosylmethioninamine from S-adenosyl-L-methionine: step 1/1. Its function is as follows. Catalyzes the decarboxylation of S-adenosylmethionine to S-adenosylmethioninamine (dcAdoMet), the propylamine donor required for the synthesis of the polyamines spermine and spermidine from the diamine putrescine. This Carboxydothermus hydrogenoformans (strain ATCC BAA-161 / DSM 6008 / Z-2901) protein is S-adenosylmethionine decarboxylase proenzyme.